Here is a 384-residue protein sequence, read N- to C-terminus: NADP-dependent alcohol dehydrogenase 3 (384 aa).

The protein belongs to the iron-containing alcohol dehydrogenase family.

The catalysed reaction is a primary alcohol + NADP(+) = an aldehyde + NADPH + H(+). In terms of biological role, has NADP-dependent alcohol dehydrogenase activity. The chain is NADP-dependent alcohol dehydrogenase 3 from Entamoeba histolytica (strain ATCC 30459 / HM-1:IMSS / ABRM).